We begin with the raw amino-acid sequence, 137 residues long: MNHTSQAFVNAATGGQPPNYERIKEEYEVSELGAPHGSASVRTTVINMPREVSVPDHVVWSLFNTLFMNFCCLGFIAYAYSVKSRDRKMVGDMTGAQAYASTAKCLNISSLVLSILMVIITIVTVVIIALNAPRLQT.

Over 1–57 (MNHTSQAFVNAATGGQPPNYERIKEEYEVSELGAPHGSASVRTTVINMPREVSVPDH) the chain is Cytoplasmic. Phosphotyrosine is present on Y20. A Glycyl lysine isopeptide (Lys-Gly) (interchain with G-Cter in ubiquitin) cross-link involves residue K24. Residue Y27 is modified to Phosphotyrosine. The helical intramembrane region spans 58-78 (VVWSLFNTLFMNFCCLGFIAY). Residues 60–93 (WSLFNTLFMNFCCLGFIAYAYSVKSRDRKMVGDM) are interaction with SPP1. 2 S-palmitoyl cysteine lipidation sites follow: C71 and C72. Over 79-109 (AYSVKSRDRKMVGDMTGAQAYASTAKCLNIS) the chain is Cytoplasmic. Residues K83, K88, and K104 each participate in a glycyl lysine isopeptide (Lys-Gly) (interchain with G-Cter in ubiquitin) cross-link. C105 carries S-palmitoyl cysteine lipidation. Residues 108–133 (ISSLVLSILMVIITIVTVVIIALNAP) are interaction with VAPA. A helical transmembrane segment spans residues 110 to 130 (SLVLSILMVIITIVTVVIIAL). At 131 to 137 (NAPRLQT) the chain is on the extracellular side.

The protein belongs to the CD225/Dispanin family. As to quaternary structure, interacts with ATP6V0B. Interacts with CD81. Interacts with SPP1; the interaction reduces OPN expression. Interacts with BRI3. Post-translationally, polyubiquitinated with both 'Lys-48' and 'Lys-63' linkages. Ubiquitination negatively regulates antiviral activity. Lys-24 is the most prevalent ubiquitination site. Phosphorylation at Tyr-20 is required for endosomal and lysosomal location.

The protein localises to the cell membrane. Its subcellular location is the late endosome membrane. The protein resides in the early endosome membrane. It localises to the lysosome membrane. It is found in the cytoplasm. The protein localises to the perinuclear region. IFN-induced antiviral protein which disrupts intracellular cholesterol homeostasis. Inhibits the entry of viruses to the host cell cytoplasm by preventing viral fusion with cholesterol depleted endosomes. May inactivate new enveloped viruses which buds out of the infected cell, by letting them go out with a cholesterol depleted membrane. Active against multiple viruses. Plays a critical role in the structural stability and function of vacuolar ATPase (v-ATPase). Establishes physical contact with the v-ATPase of endosomes which is critical for proper clathrin localization and is also required for the function of the v-ATPase to lower the pH in phagocytic endosomes thus establishing an antiviral state. The polypeptide is Interferon-induced transmembrane protein 3 (Rattus norvegicus (Rat)).